The primary structure comprises 104 residues: Astakine (104 aa).

The N-terminal stretch at 1 to 22 (MKMRGVSVGVLVVAMMSGLAMA) is a signal peptide. Cystine bridges form between Cys25/Cys38, Cys32/Cys50, Cys37/Cys76, Cys60/Cys84, and Cys78/Cys91.

This sequence belongs to the AVIT (prokineticin) family.

The protein resides in the secreted. Functionally, cytokine directly involved in hematopoiesis. This chain is Astakine, found in Pacifastacus leniusculus (Signal crayfish).